Here is a 370-residue protein sequence, read N- to C-terminus: Phosphate-binding protein PstS 3 (370 aa).

The signal sequence occupies residues 1–22; the sequence is MKLNRFGAAVGVLAAGALVLSA. Residue cysteine 23 is the site of N-palmitoyl cysteine attachment. Residue cysteine 23 is the site of S-diacylglycerol cysteine attachment. Phosphate contacts are provided by residues 56 to 58, serine 86, aspartate 104, and 191 to 193; these read STA and SGT.

It belongs to the PstS family. In terms of assembly, the complex is composed of two ATP-binding proteins (PstB), two transmembrane proteins (PstC and PstA) and a solute-binding protein (PstS).

It localises to the cell membrane. Part of the ABC transporter complex PstSACB involved in phosphate import. The sequence is that of Phosphate-binding protein PstS 3 (pstS3) from Mycobacterium bovis (strain ATCC BAA-935 / AF2122/97).